A 450-amino-acid chain; its full sequence is UPF0236 protein in vanSb 3'region (450 aa).

Belongs to the UPF0236 family.

The polypeptide is UPF0236 protein in vanSb 3'region (Streptococcus gallolyticus (Streptococcus bovis biotype I)).